The sequence spans 185 residues: C-phycoerythrin beta chain (185 aa).

2 residues coordinate (2R,3E)-phycoerythrobilin: Cys-49 and Cys-60. An N4-methylasparagine modification is found at Asn-71. Residues Cys-81 and Cys-166 each coordinate (2R,3E)-phycoerythrobilin.

It belongs to the phycobiliprotein family. Heterodimer of an alpha and a beta chain. Post-translationally, contains three covalently linked bilin chromophores.

The protein localises to the cellular thylakoid membrane. Its function is as follows. Light-harvesting photosynthetic bile pigment-protein from the phycobiliprotein complex. The polypeptide is C-phycoerythrin beta chain (cpeB) (Pseudanabaena tenuis (strain PCC 7409)).